The primary structure comprises 407 residues: DNA-directed RNA polymerase subunit Rpo1C (407 aa).

The protein belongs to the RNA polymerase beta' chain family. Part of the RNA polymerase complex.

The protein resides in the cytoplasm. The catalysed reaction is RNA(n) + a ribonucleoside 5'-triphosphate = RNA(n+1) + diphosphate. In terms of biological role, DNA-dependent RNA polymerase (RNAP) catalyzes the transcription of DNA into RNA using the four ribonucleoside triphosphates as substrates. Forms part of the jaw domain. This Aeropyrum pernix (strain ATCC 700893 / DSM 11879 / JCM 9820 / NBRC 100138 / K1) protein is DNA-directed RNA polymerase subunit Rpo1C.